The chain runs to 463 residues: L-seryl-tRNA(Sec) selenium transferase (463 aa).

At K295 the chain carries N6-(pyridoxal phosphate)lysine.

Belongs to the SelA family. Homodecamer; pentamer of dimers. Binds only one seryl-tRNA(Sec) per dimer. It depends on pyridoxal 5'-phosphate as a cofactor.

Its subcellular location is the cytoplasm. The enzyme catalyses L-seryl-tRNA(Sec) + selenophosphate + H(+) = L-selenocysteinyl-tRNA(Sec) + phosphate. The protein operates within aminoacyl-tRNA biosynthesis; selenocysteinyl-tRNA(Sec) biosynthesis; selenocysteinyl-tRNA(Sec) from L-seryl-tRNA(Sec) (bacterial route): step 1/1. Converts seryl-tRNA(Sec) to selenocysteinyl-tRNA(Sec) required for selenoprotein biosynthesis. The polypeptide is L-seryl-tRNA(Sec) selenium transferase (Escherichia coli (strain K12 / MC4100 / BW2952)).